Here is a 388-residue protein sequence, read N- to C-terminus: Protein phosphatase 2C 57 (388 aa).

The region spanning 59 to 348 (RWGYTSVQGF…DNISIIIADL (290 aa)) is the PPM-type phosphatase domain. The Mn(2+) site is built by Asp-93, Gly-94, Asp-296, and Asp-339. A helical membrane pass occupies residues 363-383 (VVVELVQAATTIGLVTVGIWM).

The protein belongs to the PP2C family. Requires Mg(2+) as cofactor. It depends on Mn(2+) as a cofactor.

The protein localises to the membrane. It is found in the plastid. It localises to the chloroplast stroma. It catalyses the reaction O-phospho-L-seryl-[protein] + H2O = L-seryl-[protein] + phosphate. The catalysed reaction is O-phospho-L-threonyl-[protein] + H2O = L-threonyl-[protein] + phosphate. Protein phosphatase specifically required for efficient dephosphorylation of the light-harvesting complex II outer antennae (LCHII) and transition from state 2 to state 1. State transition plays a central role in response to environmental changes and allows to adjust to changing light conditions via the redistribution of light excitation energy between photosystem II (PSII) and photosystem I (PSI) in a short time by relocating LHCII proteins. Mainly responsible for the dephosphorylation of Lhcb1 and Lhcb2 but not of the photosystem II core proteins. The sequence is that of Protein phosphatase 2C 57 from Arabidopsis thaliana (Mouse-ear cress).